A 521-amino-acid chain; its full sequence is Bifunctional purine biosynthesis protein PurH (521 aa).

The region spanning 1 to 145 is the MGS-like domain; it reads MIKQALISVS…KNHRDVTVVV (145 aa).

This sequence belongs to the PurH family.

It carries out the reaction (6R)-10-formyltetrahydrofolate + 5-amino-1-(5-phospho-beta-D-ribosyl)imidazole-4-carboxamide = 5-formamido-1-(5-phospho-D-ribosyl)imidazole-4-carboxamide + (6S)-5,6,7,8-tetrahydrofolate. The catalysed reaction is IMP + H2O = 5-formamido-1-(5-phospho-D-ribosyl)imidazole-4-carboxamide. The protein operates within purine metabolism; IMP biosynthesis via de novo pathway; 5-formamido-1-(5-phospho-D-ribosyl)imidazole-4-carboxamide from 5-amino-1-(5-phospho-D-ribosyl)imidazole-4-carboxamide (10-formyl THF route): step 1/1. Its pathway is purine metabolism; IMP biosynthesis via de novo pathway; IMP from 5-formamido-1-(5-phospho-D-ribosyl)imidazole-4-carboxamide: step 1/1. This chain is Bifunctional purine biosynthesis protein PurH, found in Burkholderia pseudomallei (strain 1106a).